The sequence spans 130 residues: Small ribosomal subunit protein uS9 (130 aa).

Belongs to the universal ribosomal protein uS9 family.

The sequence is that of Small ribosomal subunit protein uS9 from Burkholderia cenocepacia (strain HI2424).